The sequence spans 666 residues: Long chain acyl-CoA synthetase 4 (666 aa).

ATP is bound at residue 228 to 239 (IMYTSGTTGDPK). The segment at 495-519 (DGWLHTGDVGEWQPDGSMKIIDRKK) is fatty acid-binding.

Belongs to the ATP-dependent AMP-binding enzyme family. It depends on Mg(2+) as a cofactor.

It carries out the reaction a long-chain fatty acid + ATP + CoA = a long-chain fatty acyl-CoA + AMP + diphosphate. Its pathway is lipid metabolism; fatty acid metabolism. Functionally, activation of long-chain fatty acids for both synthesis of cellular lipids, and degradation via beta-oxidation. Preferentially uses palmitate, palmitoleate, oleate and linoleate. In Arabidopsis thaliana (Mouse-ear cress), this protein is Long chain acyl-CoA synthetase 4 (LACS4).